A 478-amino-acid polypeptide reads, in one-letter code: MNLSIQDELQLFSEELYHHLTPSLLDKLAKELGFVKRKRKFSGNELATICIWVSQRTASNSLVRLCSQLHAATGTLMSPEGLNKRFDGKAVEFLKYIFSVLWKSKLCETSAISSATFMYFQRIRILDATIFQVPKHLAHAYPGSGGCAQTAGIKIQLEYDLHSGQFLNFQVGPGKNNDKTFGTECLVTLRPGDLCIRDLGYFSLEDLDQMDQRGVYYISRLKLNHTVYMKNPSPKYFRNGTVKKQPQYTQVDLEYLMNTLKPGQTYEIKEAYIGKDQKLFSRVVIYRLTEKQLQERRTKQSYTESKKGITYSKKSKRLTGINIYVTNTPWGIVPMEQIHDFYSLRWQIEIIFKTWKSLFQIHQWQNIKQERLECHVYGRLIAIFLCSSTMFKMRQLLLHKRKRELSEYKAIGMIQDHLFLLFQAIQKNIQAITKIFIRLFTLLKKNGRKSHRYEKKTVFDIMGVIYEYSGFKKQQKVA.

Belongs to the transposase 11 family.

In terms of biological role, involved in the transposition of the insertion sequence. The protein is Transposase for insertion sequence element IS231D of Bacillus thuringiensis subsp. finitimus.